Here is a 197-residue protein sequence, read N- to C-terminus: Phosphoheptose isomerase (197 aa).

The 163-residue stretch at 34 to 196 (MVQCLLGGNK…DRTLFPQDEQ (163 aa)) folds into the SIS domain. 49 to 51 (NGG) is a binding site for substrate. Residues His58 and Glu62 each contribute to the Zn(2+) site. Residues Glu62, 91 to 92 (ND), 117 to 119 (STS), Ser122, and Gln172 contribute to the substrate site. Zn(2+) contacts are provided by Gln172 and His180.

The protein belongs to the SIS family. GmhA subfamily. In terms of assembly, homotetramer. Zn(2+) is required as a cofactor.

It localises to the cytoplasm. The enzyme catalyses 2 D-sedoheptulose 7-phosphate = D-glycero-alpha-D-manno-heptose 7-phosphate + D-glycero-beta-D-manno-heptose 7-phosphate. It functions in the pathway carbohydrate biosynthesis; D-glycero-D-manno-heptose 7-phosphate biosynthesis; D-glycero-alpha-D-manno-heptose 7-phosphate and D-glycero-beta-D-manno-heptose 7-phosphate from sedoheptulose 7-phosphate: step 1/1. Its function is as follows. Catalyzes the isomerization of sedoheptulose 7-phosphate in D-glycero-D-manno-heptose 7-phosphate. The polypeptide is Phosphoheptose isomerase (Shewanella frigidimarina (strain NCIMB 400)).